Here is a 261-residue protein sequence, read N- to C-terminus: 5'-nucleotidase SurE (261 aa).

D8, D9, S39, and N91 together coordinate a divalent metal cation.

This sequence belongs to the SurE nucleotidase family. A divalent metal cation serves as cofactor.

The protein localises to the cytoplasm. It carries out the reaction a ribonucleoside 5'-phosphate + H2O = a ribonucleoside + phosphate. Its function is as follows. Nucleotidase that shows phosphatase activity on nucleoside 5'-monophosphates. In Polaromonas naphthalenivorans (strain CJ2), this protein is 5'-nucleotidase SurE.